Consider the following 660-residue polypeptide: MAGIESVLQETRVFEPPASFVKQANIAGMDAYRTLCAEAERDYEGFWARLAHEHLLWHKPFSKVLDESRAPFYTWFEDGELNASYNCLERNLENGNADKVAVIFEADDGSVARITYRELHARVCRFANGLKALGIRKGDRVVIYMPMSIEGVVAMQACARIGATHSVVFGGFSAKSLQERIVDVGAVAVITADEQMRGGKALPLKAIADEALAMEGSEAVRHVIVYRRTGAGVNWVEGRDRAMDEVEAGQPDTCEVTPVGAEHPLFILYTSGSTGKPKGVQHSTGGYLLWALLTMQWTFDLKPDDVFWCTADIGWVTGHTYIAYGPLAAGATQVVFEGVPTYPNAGRFWDMIQKHRVNTFYTAPTAIRSLIKAAEADETSHPKRYDLSSLRLLGTVGEPINPEAWMWYHTNIGGGRCPIVDTFWQTETGGHMISPLPGATPLVPGSCTLPLPGIMAAIVDETGQDLPDGQGGILVVKRPWPAMIRTIWGDPERFRKSYFPAELGGKLYLAGDGSVRDKETGYFTIMGRIDDVLNVSGHRMGTMEIESALVANPLVAEAAVVGRPDDMTGEAICAFVVLKRTRPNGDEARQIATDLRNWVGKEIGPIAKPKDIRFGDNLPKTRSGKIMRRLLRSIAKGEDITQDTSTLENPAILEQLKEAR.

CoA contacts are provided by residues 197-200 (RGGK) and Thr317. ATP is bound by residues 397 to 399 (GEP), 421 to 426 (DTFWQT), Asp512, and Arg528. Ser536 lines the CoA pocket. Arg539 provides a ligand contact to ATP. Val550 and Val555 together coordinate Mg(2+). Position 625 is an N6-acetyllysine (Lys625).

It belongs to the ATP-dependent AMP-binding enzyme family. Mg(2+) serves as cofactor. In terms of processing, acetylated. Deacetylation by the SIR2-homolog deacetylase activates the enzyme.

It catalyses the reaction acetate + ATP + CoA = acetyl-CoA + AMP + diphosphate. In terms of biological role, catalyzes the conversion of acetate into acetyl-CoA (AcCoA), an essential intermediate at the junction of anabolic and catabolic pathways. AcsA undergoes a two-step reaction. In the first half reaction, AcsA combines acetate with ATP to form acetyl-adenylate (AcAMP) intermediate. In the second half reaction, it can then transfer the acetyl group from AcAMP to the sulfhydryl group of CoA, forming the product AcCoA. The polypeptide is Acetyl-coenzyme A synthetase (Ralstonia nicotianae (strain ATCC BAA-1114 / GMI1000) (Ralstonia solanacearum)).